Reading from the N-terminus, the 451-residue chain is Signal recognition particle 54 kDa protein (451 aa).

GTP-binding positions include glycine 105–threonine 112, aspartate 187–arginine 191, and threonine 247–aspartate 250.

Belongs to the GTP-binding SRP family. SRP54 subfamily. Part of the signal recognition particle protein translocation system, which is composed of SRP and FtsY. Archaeal SRP consists of a 7S RNA molecule of 300 nucleotides and two protein subunits: SRP54 and SRP19.

The protein localises to the cytoplasm. The enzyme catalyses GTP + H2O = GDP + phosphate + H(+). In terms of biological role, involved in targeting and insertion of nascent membrane proteins into the cytoplasmic membrane. Binds to the hydrophobic signal sequence of the ribosome-nascent chain (RNC) as it emerges from the ribosomes. The SRP-RNC complex is then targeted to the cytoplasmic membrane where it interacts with the SRP receptor FtsY. In Acidianus ambivalens (Desulfurolobus ambivalens), this protein is Signal recognition particle 54 kDa protein.